The following is a 367-amino-acid chain: Septin-1 (367 aa).

The region spanning 22–296 (KGFDFTLMVA…EGYRARCLQS (275 aa)) is the Septin-type G domain. A G1 motif region spans residues 32–39 (GESGLGKS). GTP-binding positions include 32 to 39 (GESGLGKS), T66, G92, and 171 to 179 (KADALMPKE). The segment at 89–92 (DTPG) is G3 motif. The tract at residues 170-173 (GKAD) is G4 motif. Residue S206 is modified to Phosphoserine. 2 residues coordinate GTP: G229 and R245. S248 is modified (phosphoserine; by AURKB). T251 bears the Phosphothreonine mark. A phosphoserine; by AURKB mark is found at S307 and S315.

It belongs to the TRAFAC class TrmE-Era-EngA-EngB-Septin-like GTPase superfamily. Septin GTPase family. In terms of assembly, septins polymerize into heterooligomeric protein complexes that form filaments, and can associate with cellular membranes, actin filaments and microtubules. GTPase activity is required for filament formation. Interacts with AURKB.

The protein localises to the cytoplasm. It localises to the cytoskeleton. The protein resides in the microtubule organizing center. It is found in the centrosome. Its subcellular location is the midbody. Functionally, filament-forming cytoskeletal GTPase. May play a role in cytokinesis (Potential). The protein is Septin-1 of Bos taurus (Bovine).